A 258-amino-acid chain; its full sequence is Acyl-[acyl-carrier-protein]--UDP-N-acetylglucosamine O-acyltransferase (258 aa).

This sequence belongs to the transferase hexapeptide repeat family. LpxA subfamily. As to quaternary structure, homotrimer.

The protein localises to the cytoplasm. It carries out the reaction a (3R)-hydroxyacyl-[ACP] + UDP-N-acetyl-alpha-D-glucosamine = a UDP-3-O-[(3R)-3-hydroxyacyl]-N-acetyl-alpha-D-glucosamine + holo-[ACP]. It functions in the pathway glycolipid biosynthesis; lipid IV(A) biosynthesis; lipid IV(A) from (3R)-3-hydroxytetradecanoyl-[acyl-carrier-protein] and UDP-N-acetyl-alpha-D-glucosamine: step 1/6. Involved in the biosynthesis of lipid A, a phosphorylated glycolipid that anchors the lipopolysaccharide to the outer membrane of the cell. This Pseudomonas entomophila (strain L48) protein is Acyl-[acyl-carrier-protein]--UDP-N-acetylglucosamine O-acyltransferase.